A 242-amino-acid polypeptide reads, in one-letter code: MLLFPRRTNIAFFKTTGIFANFPLLGRTITTSPSFLTHKLSKEVTRASTSPPRPKRIVVAITGATGVALGIRLLQVLKELSVETHLVISKWGAATMKYETDWEPHDVAALATKTYSVRDVSACISSGSFQHDGMIVVPCSMKSLAAIRIGFTEDLITRAADVSIKENRKLLLVTRETPLSSIHLENMLSLCRAGVIIFPPVPAFYTRPKSLHDLLEQSVGRILDCFGIHADTFPRWEGIKSK.

The N-terminal 58 residues, 1–58 (MLLFPRRTNIAFFKTTGIFANFPLLGRTITTSPSFLTHKLSKEVTRASTSPPRPKRIV), are a transit peptide targeting the mitochondrion. Residues 63–65 (GAT), Ser89, 140–143 (SMKS), and Arg175 each bind FMN. Dimethylallyl phosphate contacts are provided by Tyr205 and Arg221.

The protein belongs to the UbiX/PAD1 family. Oligomer.

Its subcellular location is the mitochondrion. The catalysed reaction is dimethylallyl phosphate + FMNH2 = prenylated FMNH2 + phosphate. Its function is as follows. Flavin prenyltransferase that catalyzes the synthesis of the prenylated FMN cofactor (prenyl-FMN) for the ferulic acid decarboxylase FDC1/ubiD. The prenyltransferase is metal-independent and links a dimethylallyl moiety from dimethylallyl monophosphate (DMAP) to the flavin N5 and C6 atoms of FMN. Involved in the decarboxylation of phenylacrylic acids like ferulic acid, p-coumaric acid or cinnamic acid, producing the corresponding vinyl derivatives which play the role of aroma metabolites. Also involved in the degradation of the food preservative sorbic acid (2,4-hexadienoic acid) to a volatile hydrocarbon, 1,3-pentadiene. Not essential for ubiquinone synthesis. Can rescue Q biosynthesis in E.coli strains lacking UbiX. Has mRNA binding activity. The polypeptide is Flavin prenyltransferase PAD1, mitochondrial (Saccharomyces cerevisiae (strain ATCC 204508 / S288c) (Baker's yeast)).